The chain runs to 193 residues: WYSSMFAANIKQEPISHHLHHHHAHHSHHRHDSNSNSNASSPHQSPLPSPNPPSNTNLQLEQYLKQQQQQQQLQQQQQQPMDTLCAAAMTPSPSNNDQNSLGWLSGLPNPMQTIMPANMRPSPTATTATAAAAAPTTTVAAIALQANDKLQALTPPMDVTPPKSPAKSQQSCAEPEKEHDLMSNSSEDMKYMA.

A compositionally biased stretch (basic residues) spans 18-31; that stretch reads HLHHHHAHHSHHRH. Disordered stretches follow at residues 18–57 and 153–193; these read HLHH…SNTN and LTPP…KYMA. The span at 34 to 44 shows a compositional bias: low complexity; that stretch reads NSNSNASSPHQ. Residues 174-193 show a composition bias toward basic and acidic residues; the sequence is EPEKEHDLMSNSSEDMKYMA.

The protein belongs to the hunchback C2H2-type zinc-finger protein family.

It localises to the nucleus. Its function is as follows. Gap class segmentation protein that controls development of head structures. The chain is Protein hunchback (hb) from Drosophila petalopeza (Fruit fly).